The chain runs to 488 residues: Cysteine desulfurase, mitochondrial (488 aa).

The interval 25–52 (LPKPLATSSSPATNAPNKTSNPKTGELH) is disordered. Polar residues predominate over residues 30 to 47 (ATSSSPATNAPNKTSNPK). Residues 157–158 (AT), Asn-237, Gln-265, and 285–287 (SSH) contribute to the pyridoxal 5'-phosphate site. At Lys-288 the chain carries N6-(pyridoxal phosphate)lysine. Residue Thr-325 participates in pyridoxal 5'-phosphate binding. Residue Cys-412 is the Cysteine persulfide intermediate of the active site. Cys-412 provides a ligand contact to [2Fe-2S] cluster.

It belongs to the class-V pyridoxal-phosphate-dependent aminotransferase family. NifS/IscS subfamily. Requires pyridoxal 5'-phosphate as cofactor.

The protein resides in the mitochondrion. It catalyses the reaction (sulfur carrier)-H + L-cysteine = (sulfur carrier)-SH + L-alanine. Functionally, catalyzes the removal of elemental sulfur from cysteine to produce alanine. It supplies the inorganic sulfur for iron-sulfur (Fe-S) clusters. Plays a role in both tRNA-processing and mitochondrial metabolism. Involved in the 2-thio-modification of both 5-carboxymethylaminomethyl-2-thiouridine in mitochondrial tRNAs and 5-methoxycarbonylmethyl-2-thiouridine (mcm5s2U) in cytoplasmic tRNAs. This Candida albicans (strain SC5314 / ATCC MYA-2876) (Yeast) protein is Cysteine desulfurase, mitochondrial (NFS1).